The chain runs to 125 residues: Small ribosomal subunit protein bS16 (125 aa).

Positions glutamate 87–aspartate 125 are disordered. The span at alanine 103–glutamate 115 shows a compositional bias: basic and acidic residues.

Belongs to the bacterial ribosomal protein bS16 family.

The chain is Small ribosomal subunit protein bS16 from Prochlorococcus marinus (strain MIT 9211).